The following is a 171-amino-acid chain: Large ribosomal subunit protein uL10 (171 aa).

It belongs to the universal ribosomal protein uL10 family. In terms of assembly, part of the ribosomal stalk of the 50S ribosomal subunit. The N-terminus interacts with L11 and the large rRNA to form the base of the stalk. The C-terminus forms an elongated spine to which L12 dimers bind in a sequential fashion forming a multimeric L10(L12)X complex.

Forms part of the ribosomal stalk, playing a central role in the interaction of the ribosome with GTP-bound translation factors. This Nitrosomonas europaea (strain ATCC 19718 / CIP 103999 / KCTC 2705 / NBRC 14298) protein is Large ribosomal subunit protein uL10.